Here is a 313-residue protein sequence, read N- to C-terminus: Biotin synthase (313 aa).

Residues 28–258 (NFGNDIELCS…LFPQARLRLS (231 aa)) enclose the Radical SAM core domain. [4Fe-4S] cluster contacts are provided by cysteine 46, cysteine 50, and cysteine 53. Residues cysteine 90, cysteine 121, cysteine 181, and arginine 256 each contribute to the [2Fe-2S] cluster site.

The protein belongs to the radical SAM superfamily. Biotin synthase family. Homodimer. [4Fe-4S] cluster serves as cofactor. Requires [2Fe-2S] cluster as cofactor.

It carries out the reaction (4R,5S)-dethiobiotin + (sulfur carrier)-SH + 2 reduced [2Fe-2S]-[ferredoxin] + 2 S-adenosyl-L-methionine = (sulfur carrier)-H + biotin + 2 5'-deoxyadenosine + 2 L-methionine + 2 oxidized [2Fe-2S]-[ferredoxin]. The protein operates within cofactor biosynthesis; biotin biosynthesis; biotin from 7,8-diaminononanoate: step 2/2. Its function is as follows. Catalyzes the conversion of dethiobiotin (DTB) to biotin by the insertion of a sulfur atom into dethiobiotin via a radical-based mechanism. The sequence is that of Biotin synthase from Francisella tularensis subsp. tularensis (strain WY96-3418).